The chain runs to 325 residues: Probable exonuclease subunit 1 (325 aa).

As to quaternary structure, could consist of two subunits: D13 and D12.

Its function is as follows. Possible exonuclease involved in phage DNA recombination, replication, and repair. The polypeptide is Probable exonuclease subunit 1 (D12) (Escherichia coli (Enterobacteria phage T5)).